A 402-amino-acid polypeptide reads, in one-letter code: uncharacterized protein (402 aa).

This is an uncharacterized protein from Saccharomyces cerevisiae (strain ATCC 204508 / S288c) (Baker's yeast).